The sequence spans 458 residues: Retinoic acid receptor alpha (458 aa).

Residues 1–86 (MASNGGSCPS…PPPLPRIYKP (86 aa)) form a modulating region. Residues 54–68 (TPSPATIETQSTSSE) are compositionally biased toward polar residues. The tract at residues 54-76 (TPSPATIETQSTSSEEIVPSPPS) is disordered. NR C4-type zinc fingers lie at residues 87-107 (CFVCQDKSSGYHYGVSACEGC) and 123-147 (CHRDKTCIINKVTRNRCQYCRLQKC). Residues 87 to 152 (CFVCQDKSSG…RLQKCFEVGM (66 aa)) constitute a DNA-binding region (nuclear receptor). Residues 153-182 (SKESVRNDRNKKKKQEAPKQECTESYIITP) are hinge. Positions 183 to 417 (EVEDLVEKVR…PLIQEMLENS (235 aa)) constitute an NR LBD domain. The 9aaTAD motif lies at 408 to 416 (PLIQEMLEN). The interval 417–458 (SEGLDSLTGQPPRASSLAPPPGSCSPSLSPSSNRSSPTSHSP) is disordered. Low complexity predominate over residues 440–458 (CSPSLSPSSNRSSPTSHSP).

The protein belongs to the nuclear hormone receptor family. NR1 subfamily. Heterodimer; with an rxr molecule. Binds DNA preferentially as a rar/rxr heterodimer. As to expression, expressed in forelimb, in the distal forelimb blastema, kidney, liver and hindlimb blastemal mesenchymal cells.

The protein resides in the nucleus. Receptor for retinoic acid. Retinoic acid receptors bind as heterodimers to their target response elements in response to their ligands, all-trans or 9-cis retinoic acid, and regulate gene expression in various biological processes. The rar/rxr heterodimers bind to the retinoic acid response elements (RARE) composed of tandem 5'-AGGTCA-3' sites known as DR1-DR5. Retinoic acid signaling appears to be involved in specifying proximal-distal axis in limb regeneration. The chain is Retinoic acid receptor alpha (RARA) from Notophthalmus viridescens (Eastern newt).